A 431-amino-acid polypeptide reads, in one-letter code: Putative serine/threonine-protein kinase A (431 aa).

The region spanning 20–279 (YLNKGIVGLG…VREIFQIPYI (260 aa)) is the Protein kinase domain. ATP contacts are provided by residues 26-34 (VGLGSYGEA) and Lys49. Catalysis depends on Asp147, which acts as the Proton acceptor. The 99-residue stretch at 331–429 (DVTHRGHVNK…WVHAIQRGIG (99 aa)) folds into the PH domain.

It belongs to the protein kinase superfamily. Ser/Thr protein kinase family.

The catalysed reaction is L-seryl-[protein] + ATP = O-phospho-L-seryl-[protein] + ADP + H(+). It catalyses the reaction L-threonyl-[protein] + ATP = O-phospho-L-threonyl-[protein] + ADP + H(+). This chain is Putative serine/threonine-protein kinase A (NRKA), found in Trypanosoma brucei brucei.